The primary structure comprises 510 residues: 2,3-bisphosphoglycerate-independent phosphoglycerate mutase (510 aa).

2 residues coordinate Mn(2+): D14 and S64. Catalysis depends on S64, which acts as the Phosphoserine intermediate. Substrate-binding positions include H125, 155–156 (RD), R187, R193, 259–262 (RADR), and K332. Mn(2+) contacts are provided by D399, H403, D440, H441, and H459.

The protein belongs to the BPG-independent phosphoglycerate mutase family. As to quaternary structure, monomer. Requires Mn(2+) as cofactor.

The enzyme catalyses (2R)-2-phosphoglycerate = (2R)-3-phosphoglycerate. It functions in the pathway carbohydrate degradation; glycolysis; pyruvate from D-glyceraldehyde 3-phosphate: step 3/5. In terms of biological role, catalyzes the interconversion of 2-phosphoglycerate and 3-phosphoglycerate. The chain is 2,3-bisphosphoglycerate-independent phosphoglycerate mutase from Pseudomonas syringae pv. syringae (strain B728a).